A 299-amino-acid chain; its full sequence is Non-structural protein V (299 aa).

The segment at 40–98 is disordered; sequence SDNPGQEQATCKEEEAGASGLSKPCLSAIGSTEGGAPRIRGQGSGESDDDTETLGFPSR. The segment at 110-120 is interaction with host STAT1; the sequence is YYVYDHSGEAV. Low complexity predominate over residues 134-145; the sequence is GLDGDSTLSGGD. Disordered stretches follow at residues 134 to 174 and 204 to 230; these read GLDG…APIS and PKLG…PIKK. Residues 146–160 show a composition bias toward acidic residues; that stretch reads NESENSDVDIGEPDT. 8 residues coordinate Zn(2+): His-232, Cys-251, Cys-255, Cys-267, Cys-269, Cys-272, Cys-276, and Cys-279.

It belongs to the paramyxoviruses V protein family. Interacts with host IFIH1/MDA5 and DHX58/LGP2; these interactions are involved in the inhibition of the host type I interferon signaling pathway. Interacts with host TYK2; this interaction inhibits the type I interferon signaling pathway without affecting the type II pathway. Interacts with host IRF7; this interaction inhibits IRF7 translocation to the nucleus. Interacts with host CHUK. Interacts with host RELA/p65; this interaction inhibits the nuclear translocation of NF-KappaB. Interacts (via N-terminus) with host STAT1 and JAK1; these interactions inhibit STAT1 phosphorylation by Jak1 and thereby the type I interferon signaling pathway. Interacts (via C-terminus) with host STAT2; this interaction is involved in the inhibition of the host type I interferon signaling pathway. Forms a complex with host PPP1CA and PPP1CC; this interaction prevents dephosphorylation of host IFIH1/MDA5 and leads to the inhibition of the host type I interferon signaling pathway. Interacts with host IRF9; this interaction prevents the binding of IRF9 to STAT2 and thereby the type I interferon signaling pathway. Interacts with host RIGI regulatory protein (via CARDs domain) and host TRIM25 (via SPRY domain); these interactions prevent TRIM25-mediated ubiquitination of RIG-I and disrupts downstream RIG-I signaling.

It is found in the host cytoplasm. Functionally, plays an essential role in the inhibition of host immune response. Prevents the establishment of cellular antiviral state by blocking interferon-alpha/beta (IFN-alpha/beta) production and signaling pathway. Interacts with host IFIH1/MDA5 and DHX58/LGP2 to inhibit the transduction pathway involved in the activation of IFN-beta promoter, thus protecting the virus against cell antiviral state. Blocks the type I interferon signaling pathway by interacting with host TYK2 and thereby inhibiting downstream STAT1 and STAT2 phosphorylation. Blocks the type I interferon signaling pathway by disrupting the RIG-I signaling pathway. Moderately affects the type II interferon signaling. Prevents PP1alpha/gamma-mediated dephosphorylation of host IFIH1/MDA5 and thus blocks its activation. The polypeptide is Non-structural protein V (P/V) (Measles virus (strain IP-3-Ca) (MeV)).